A 580-amino-acid polypeptide reads, in one-letter code: External alternative NAD(P)H-ubiquinone oxidoreductase B3, mitochondrial (580 aa).

The N-terminal 38 residues, Met-1 to Ser-38, are a transit peptide targeting the mitochondrion. Lys-57–Arg-87 contacts FAD. Leu-221–Leu-257 serves as a coordination point for NAD(+). The region spanning Lys-377–Arg-412 is the EF-hand domain. Ca(2+)-binding residues include Asp-390, Ser-394, Thr-396, and Glu-401. The Microbody targeting signal signature appears at Phe-571 to Ile-580.

It belongs to the NADH dehydrogenase family. FAD is required as a cofactor. As to expression, expressed at low levels in seedlings, roots, stems, buds and flowers and, to a lower extent, in leaves and cotyledons.

The protein resides in the mitochondrion inner membrane. It localises to the peroxisome. It carries out the reaction a quinone + NADH + H(+) = a quinol + NAD(+). The enzyme catalyses a ubiquinone + NADH + H(+) = a ubiquinol + NAD(+). Alternative NADH-ubiquinone oxidoreductase which catalyzes the oxidation of mitochondrial NADH does not translocate protons across the inner mitochondrial membrane. The chain is External alternative NAD(P)H-ubiquinone oxidoreductase B3, mitochondrial (NDB3) from Arabidopsis thaliana (Mouse-ear cress).